Reading from the N-terminus, the 425-residue chain is tRNA(Met) cytidine acetate ligase (425 aa).

ATP contacts are provided by residues 7 to 20 (IVEY…HLYH), Gly102, Asn165, and 190 to 191 (RI).

The protein belongs to the TmcAL family.

Its subcellular location is the cytoplasm. It catalyses the reaction cytidine(34) in elongator tRNA(Met) + acetate + ATP = N(4)-acetylcytidine(34) in elongator tRNA(Met) + AMP + diphosphate. Functionally, catalyzes the formation of N(4)-acetylcytidine (ac(4)C) at the wobble position of elongator tRNA(Met), using acetate and ATP as substrates. First activates an acetate ion to form acetyladenylate (Ac-AMP) and then transfers the acetyl group to tRNA to form ac(4)C34. The protein is tRNA(Met) cytidine acetate ligase of Thermosipho melanesiensis (strain DSM 12029 / CIP 104789 / BI429).